Reading from the N-terminus, the 828-residue chain is Auxin response factor 2B (828 aa).

Positions 128–230 (FCKTLTASDT…ELRVGVRRAM (103 aa)) form a DNA-binding region, TF-B3. Disordered stretches follow at residues 348–397 (PDRV…GSSK), 681–703 (EQFQ…HSTR), and 791–828 (NPGT…PEDS). Pro residues predominate over residues 360 to 370 (LSPPALNPLPI). Residues 380-390 (VLPSSPDSSVL) are compositionally biased toward polar residues. Residues 703–786 (RSCTKVHKQG…RKIFIYTKDE (84 aa)) form the PB1 domain. The segment covering 791 to 806 (NPGTLNSKGEDNSSVA) has biased composition (polar residues).

Belongs to the ARF family. In terms of assembly, homodimers and heterodimers. As to expression, expressed in root, leaf and stem. Also expressed in flower and fruit. Expressed in flower buds about three days before opening including stamen, petal and sepal with the highest in ovary.

It is found in the nucleus. Functionally, auxin response factors (ARFs) are transcriptional factors that binds specifically to the DNA sequence 5'-TGTCTC-3' found in the auxin-responsive promoter elements (AuxREs). Could act as transcriptional activator or repressor. Involved in the control of fruit ripening process. Regulates expression of a number of ripening regulators, transcription factors, and ethylene biosynthesis and signaling components. May act as a transcriptional repressor of auxin-responsive genes. The protein is Auxin response factor 2B of Solanum lycopersicum (Tomato).